The following is a 172-amino-acid chain: Large ribosomal subunit protein uL10 (172 aa).

This sequence belongs to the universal ribosomal protein uL10 family. Part of the ribosomal stalk of the 50S ribosomal subunit. The N-terminus interacts with L11 and the large rRNA to form the base of the stalk. The C-terminus forms an elongated spine to which L12 dimers bind in a sequential fashion forming a multimeric L10(L12)X complex.

Its function is as follows. Forms part of the ribosomal stalk, playing a central role in the interaction of the ribosome with GTP-bound translation factors. This is Large ribosomal subunit protein uL10 from Acidothermus cellulolyticus (strain ATCC 43068 / DSM 8971 / 11B).